Reading from the N-terminus, the 801-residue chain is Vacuolar transporter chaperone complex subunit 4 (801 aa).

The Cytoplasmic portion of the chain corresponds to 1 to 692; sequence MPFSKAWRSA…MLKWTEHATR (692 aa). ATP contacts are provided by Lys215, Arg286, Arg288, Lys312, Lys325, and Arg391. Mn(2+) is bound at residue Glu441. Residue Lys473 is part of the active site. The helical transmembrane segment at 693–713 threads the bilayer; it reads LGLVGLGVIQFGNSMTLPGDV. Residues 714–723 lie on the Vacuolar side of the membrane; sequence TQLSSFWRAN. The helical transmembrane segment at 724–744 threads the bilayer; that stretch reads FHIVLGIALVLVALMTLMYAL. The Cytoplasmic portion of the chain corresponds to 745-768; it reads MTFKARSRRVYARKKIRFDDSWGP. The helical transmembrane segment at 769–789 threads the bilayer; the sequence is TVLTVFLAFGICVIAMMHILG. At 790–801 the chain is on the vacuolar side; sequence RYGPMLTGDDNF.

It belongs to the VTC4 family. As to quaternary structure, the VTC core complex is an integral membrane heterooligomer composed of at least the catalytic subunit vtc4 and the accessory subunits vtc1 and vtc2. vtc1 is a small membrane protein without hydrophilic domain. Vtc2 and vtc4 are related and have 2 hydrophilic domains that face the cytosol, an N-terminal SPX domain and the central core domain. The central core in vtc4 is the catalytic domain. Requires Mn(2+) as cofactor.

The protein resides in the acidocalcisome membrane. The catalysed reaction is [phosphate](n) + ATP = [phosphate](n+1) + ADP. With respect to regulation, activity of the enzyme is Mn(2+)-dependent and enhanced in the presence of pyrophosphate (PPi). Component of a polyphosphate synthase complex that utilizes ATP to synthesize and translocate polyphosphate to acidocalcisomes in epimastigotes, insect-stages of Trypanosoma brucei. Catalytic subunit of the vacuolar transporter chaperone (VTC) complex. The VTC complex acts as a vacuolar polyphosphate polymerase that catalyzes the synthesis of inorganic polyphosphate (polyP) via transfer of phosphate from ATP to a growing polyP chain, releasing ADP. VTC exposes its catalytic domain vtc4 to the cytosol, where the growing polyP chain winds through a tunnel-shaped pocket, integrating cytoplasmic polymer synthesis with polyP membrane translocation. The VTC complex carries 9 vacuolar transmembrane domains, which are likely to constitute the translocation channel into the organelle lumen. PolyP synthesis is tightly coupled to its transport into the vacuole lumen, in order to avoid otherwise toxic intermediates in the cytosol, and it depends on the proton gradient across the membrane, formed by V-ATPase. The VTC complex also plays a role in vacuolar membrane fusion. Essential for infection and parasite survival in the mammalian host. The protein is Vacuolar transporter chaperone complex subunit 4 of Trypanosoma cruzi (strain CL Brener).